A 136-amino-acid chain; its full sequence is ATP synthase epsilon chain, chloroplastic (136 aa).

Belongs to the ATPase epsilon chain family. As to quaternary structure, F-type ATPases have 2 components, CF(1) - the catalytic core - and CF(0) - the membrane proton channel. CF(1) has five subunits: alpha(3), beta(3), gamma(1), delta(1), epsilon(1). CF(0) has three main subunits: a, b and c.

Its subcellular location is the plastid. It is found in the chloroplast thylakoid membrane. In terms of biological role, produces ATP from ADP in the presence of a proton gradient across the membrane. The sequence is that of ATP synthase epsilon chain, chloroplastic from Chaetosphaeridium globosum (Charophycean green alga).